The primary structure comprises 547 residues: Putative laccase-5 (547 aa).

Positions 1-35 are cleaved as a signal peptide; the sequence is MGTPRGLRNAGSSSSACRFLAAFAVLLALPTLTAG. 2 Plastocyanin-like domains span residues 43-159 and 170-323; these read NVQM…PKRG and ELPP…YAPT. Residues Asn-48 and Asn-89 are each glycosylated (N-linked (GlcNAc...) asparagine). Cu cation contacts are provided by His-93, His-95, His-138, and His-140. N-linked (GlcNAc...) asparagine glycosylation is found at Asn-199, Asn-215, Asn-251, Asn-311, Asn-342, Asn-349, Asn-388, Asn-395, Asn-405, and Asn-430. Residues 408–531 enclose the Plastocyanin-like 3 domain; that stretch reads FVRPRVALLE…SMAWLVNDGP (124 aa). His-448, His-451, His-453, His-510, Cys-511, His-512, and His-516 together coordinate Cu cation.

This sequence belongs to the multicopper oxidase family. Requires Cu cation as cofactor.

The protein localises to the secreted. Its subcellular location is the extracellular space. The protein resides in the apoplast. It carries out the reaction 4 hydroquinone + O2 = 4 benzosemiquinone + 2 H2O. Functionally, lignin degradation and detoxification of lignin-derived products. The protein is Putative laccase-5 (LAC5) of Oryza sativa subsp. japonica (Rice).